We begin with the raw amino-acid sequence, 150 residues long: Large ribosomal subunit protein bL9 (150 aa).

The protein belongs to the bacterial ribosomal protein bL9 family.

Its function is as follows. Binds to the 23S rRNA. This is Large ribosomal subunit protein bL9 from Shewanella pealeana (strain ATCC 700345 / ANG-SQ1).